The chain runs to 109 residues: Putative double-stranded DNA mimic protein Ent638_2296 (109 aa).

This sequence belongs to the putative dsDNA mimic protein family.

Functionally, may act as a double-stranded DNA (dsDNA) mimic. Probably regulates the activity of a dsDNA-binding protein. The protein is Putative double-stranded DNA mimic protein Ent638_2296 of Enterobacter sp. (strain 638).